The sequence spans 892 residues: Gamma-tubulin small complex component GCP3 (892 aa).

This sequence belongs to the TUBGCP family. Component of the gamma-tubulin small complex (gamma-TuSC) composed of tubulin gamma chain, gamma-tubulin complex protein 2 (GCP2) and gamma-tubulin complex protein 3 (GCP3). Interacts with tubulin gamma chain.

It is found in the cytoplasm. It localises to the cytoskeleton. Its subcellular location is the flagellum axoneme. The protein localises to the flagellum basal body. Functionally, component of the gamma-tubulin small complex (gamma-TuSC) involved in microtubule (MT) nucleation for the formation of median bodies and in the biogenesis of flagella. Gamma-TuSC may be required for the correct positioning of EB1 within the trophozoites. This chain is Gamma-tubulin small complex component GCP3, found in Giardia intestinalis (strain ATCC 50803 / WB clone C6) (Giardia lamblia).